Here is a 250-residue protein sequence, read N- to C-terminus: Protein lin-28 homolog B (250 aa).

Positions 1–26 are disordered; the sequence is MAEGGASKGGGEEPGKLPEPAEEESQ. A CSD domain is found at 29 to 102; it reads RGTGHCKWFN…GLESIRVTGP (74 aa). Phosphoserine occurs at positions 54, 96, 105, and 110. The segment at 98–126 is disordered; the sequence is RVTGPGGSPCLGSERRPKGKTLQKRKPKG. The short motif at 112–125 is the Bipartite nuclear localization signal element; sequence RRPKGKTLQKRKPK. The segment covering 114–125 has biased composition (basic residues); it reads PKGKTLQKRKPK. 2 CCHC-type zinc fingers span residues 127-144 and 149-166; these read DRCY…ECSL and KKCH…NCPH. Residues Cys129, Cys132, His137, Cys142, Cys151, Cys154, His159, and Cys164 each contribute to the Zn(2+) site. The segment at 169–250 is disordered; it reads VAQPPASSQG…GPSVQKRKKT (82 aa). Residues 173–191 are compositionally biased toward polar residues; that stretch reads PASSQGRQEAESQPCTSTL. Ser203 carries the post-translational modification Phosphoserine. Positions 210–219 are enriched in basic and acidic residues; sequence ARAEISERSG. The segment covering 220 to 231 has biased composition (polar residues); sequence RSPQEASSTKSS. The Nucleolar localization signal motif lies at 239 to 250; that stretch reads KKGPSVQKRKKT.

This sequence belongs to the lin-28 family. As to expression, expressed at high levels in the placenta and, at mucher lower, in testis and fetal liver. Isoform 1 is only detected in placenta and in moderately and poorly differentiated hepatocellular carcinoma cells (at protein level). Isoform 2 is detected in fetal liver, non-tumor liver tissues, as well as well-differentiated tumor tissues (at protein level). Tends to be up-regulated in triple-negative (ER-,PR-,HER2-) breast tumors, as well as in liver, ovarian, and thyroid carcinomas.

It localises to the nucleus. Its subcellular location is the nucleolus. The protein localises to the cytoplasm. Functionally, suppressor of microRNA (miRNA) biogenesis, including that of let-7 and possibly of miR107, miR-143 and miR-200c. Binds primary let-7 transcripts (pri-let-7), including pri-let-7g and pri-let-7a-1, and sequester them in the nucleolus, away from the microprocessor complex, hence preventing their processing into mature miRNA. Does not act on pri-miR21. The repression of let-7 expression is required for normal development and contributes to maintain the pluripotent state of embryonic stem cells by preventing let-7-mediated differentiation. When overexpressed, recruits ZCCHC11/TUT4 uridylyltransferase to pre-let-7 transcripts, leading to their terminal uridylation and degradation. This activity might not be relevant in vivo, as LIN28B-mediated inhibition of let-7 miRNA maturation appears to be ZCCHC11-independent. Interaction with target pre-miRNAs occurs via an 5'-GGAG-3' motif in the pre-miRNA terminal loop. Mediates MYC-induced let-7 repression. When overexpressed, isoform 1 stimulates growth of the breast adenocarcinoma cell line MCF-7. Isoform 2 has no effect on cell growth. This chain is Protein lin-28 homolog B (LIN28B), found in Homo sapiens (Human).